A 1364-amino-acid chain; its full sequence is MAELKVEAPASVDWQKRCLTLETQLFRFRLQASKIRELLADKMQELEQRLLEAEQRAENAETQVGVMEEKVKLSNLKNVDSEGSLHRKYQELLKAIKGKDELISQLEAQLEKQKQMRAEEAKTVQEKAAKIKEWVTLKLAKLEMENQHLKSHNQRLVEQVGSLQDALEAIQIAPSRKLLVPPYGAAEQDSVPSEPGIQPMGQDSGSQAQGLKAAVLAPSPGALQSKDSVSEAASPLEDSSSSTVHSGETVEAKPLQPHLGRESPPHQPCMKLLTFRCSSASWGEGLVTAQRGMLPGTKTSAREGGPGSSLTLPKVRAPGTPRDSIQLAKRHHSQPQVGHGHFGRVVNIETEAFSALHPSGLPELESRARSREEPEKMEMEEPPPAGKNEERESPKALGAELEEVELGNKPPTPPLHQFSSWESRIYAVATSGMRLSDMSPRSNTACCASSPPALVSPGSFSGLVYKNVTVPVYTALKGRATQISNMPFMDESSGSDDDCSSQASFRISVPSSESRKTSGLGSPRAIKRGVSMSSLSSEGDYAIPPDACSLDSDYSEPEHKLQRTSSYSTDGLGLGGESLEKSGYLLKMGSQVKTWKRRWFVLRQGQIMYYKSPSDVIRKPQGQVDLNSRCQIVRGEGSQTFQLISEKKTYYLTADSPSLLEEWIRVLQSLLKVQATGPPALLRGGTKPTVKGWLTKVKHGHSKVVWCALVGKIFYYYRSHEDKRPLGCLPVRDAHIEEVDRSCDSDEDYEAGGTRRLLSSHCTLVIHPTEHSPTYLLIGTKHEKDTWLYHLTVAAGGSSAKVGTAYEQLIGKLMDGEGDPDSPLWRHPMLCYSKDGLYASLTTLPSEALQTEALKLFKSCQLFINVPVEAASVDYHVSLAQTALQVCLVHPELQSEIYCQLMKQTSCRPPQKYSLMQCWQLLALCAPLFLPQHHFLWYVKQQLQRHADPRSETGQYATYCQRAVERTLRTGEREARPSRMEVVSILLRNPFHHSLPFSIPVHFTNGTYHVVGFDGSSTVDEFLQRLNQEIGMRKPSHSGFALFTDDPSGRDLEHCLQGSVKICDAISKWEQAMKELHPGKSEGGTRVVKLMYKNRLYFRSQVKGETDRERLLLASQTSREIVAGRFPINKELALEMAALMAQVEYGDLEKPALPGPGGTSPAKAQHLLQQVLDRFHPRRYRHGAPAEQLRHLADMLTTKWATLQGCSPPECIRIYLTVARKWPFFGAKLFAAQPAQLSSKENALVWIAVNEDGVSILDHNTMQVHITYPYSSVTTFGGCRDDFMLVIRSIPDKSSGKSHIEKLIFRMAAPKIAEATFIMASYMNHCTTTVNPPTNPPGACQLWELDGRQFFSSVSCATKGPTLL.

Residues 28–169 are a coiled coil; it reads FRLQASKIRE…VGSLQDALEA (142 aa). Disordered stretches follow at residues 184 to 266, 296 to 321, 356 to 395, 487 to 529, and 546 to 568; these read GAAE…SPPH, GTKT…PGTP, LHPS…ESPK, PFMD…IKRG, and DACS…SSYS. Polar residues predominate over residues 237 to 246; the sequence is EDSSSSTVHS. Residues 364–379 show a composition bias toward basic and acidic residues; that stretch reads LESRARSREEPEKMEM. The span at 509–520 shows a compositional bias: polar residues; the sequence is VPSSESRKTSGL. PH domains follow at residues 578–672 and 687–796; these read SLEK…SLLK and KPTV…VAAG. Position 745 is a phosphoserine (Ser-745). The MyTH4 domain occupies 832-986; sequence YSKDGLYASL…PSRMEVVSIL (155 aa). The region spanning 997–1333 is the FERM domain; sequence FSIPVHFTNG…NHCTTTVNPP (337 aa).

The protein is Pleckstrin homology domain-containing family H member 1 (PLEKHH1) of Homo sapiens (Human).